The chain runs to 635 residues: UvrABC system protein C (635 aa).

One can recognise a GIY-YIG domain in the interval 20 to 97; it reads ERSGVYRMFD…IKKFQPKFNI (78 aa). Residues 207 to 242 enclose the UVR domain; sequence KELQENLSKKMEELSEQMRFEEAAEIRDRIKALSYV.

It belongs to the UvrC family. As to quaternary structure, interacts with UvrB in an incision complex.

It localises to the cytoplasm. Functionally, the UvrABC repair system catalyzes the recognition and processing of DNA lesions. UvrC both incises the 5' and 3' sides of the lesion. The N-terminal half is responsible for the 3' incision and the C-terminal half is responsible for the 5' incision. In Rickettsia bellii (strain RML369-C), this protein is UvrABC system protein C.